Reading from the N-terminus, the 506-residue chain is Lysine--tRNA ligase (506 aa).

2 residues coordinate Mg(2+): Glu415 and Glu422.

Belongs to the class-II aminoacyl-tRNA synthetase family. In terms of assembly, homodimer. The cofactor is Mg(2+).

It localises to the cytoplasm. The catalysed reaction is tRNA(Lys) + L-lysine + ATP = L-lysyl-tRNA(Lys) + AMP + diphosphate. The polypeptide is Lysine--tRNA ligase (Erwinia tasmaniensis (strain DSM 17950 / CFBP 7177 / CIP 109463 / NCPPB 4357 / Et1/99)).